The following is a 503-amino-acid chain: MVLEMLNPMHYKVTSMVSEVVPFASIAVLLLTGFLLLVWNYKNTSSIPGPGYFLGIGPLISYLRFLWMGIGSACNYYNKTYGEFIRVWIGGEETLIISKSSSVFHVMKHSHYTSRFGSKPGLQFIGMHEKGIIFNNNPVLWKAVRTYFMKALSGPGLVRMVTVCADSITKHLDKLEEVRNDLGYVDVLTLMRRIMLDTSNNLFLGIPLDEKAIVCKIQGYFDAWQALLLKPDIFFKIPWLYRKYEKSVKDLKEDMEILIEKKRRRIFTAEKLEDCMDFATELILAEKRGELTKENVNQCILEMLIAAPDTMSVTVFFMLFLIAKHPQVEEELMKEIQTVVGERDIRNDDMQKLEVVENFIYESMRYQPVVDLVMRKALEDDVIDGYPVKKGTNIILNIGRMHRLEFFPKPNEFTLENFAKNVPYRYFQPFGFGPRACAGKYIAMVMMKVTLVILLRRFQVQTPQDRCVEKMQKKNDLSLHPDETSGLLEMIFIPRNSDKCFTK.

C437 lines the heme pocket.

Belongs to the cytochrome P450 family. Heme is required as a cofactor.

It localises to the membrane. The catalysed reaction is testosterone + 3 reduced [NADPH--hemoprotein reductase] + 3 O2 = 17beta-estradiol + formate + 3 oxidized [NADPH--hemoprotein reductase] + 4 H2O + 4 H(+). It carries out the reaction androst-4-ene-3,17-dione + 3 reduced [NADPH--hemoprotein reductase] + 3 O2 = estrone + formate + 3 oxidized [NADPH--hemoprotein reductase] + 4 H2O + 4 H(+). Its function is as follows. Catalyzes the formation of aromatic C18 estrogens from C19 androgens. This chain is Aromatase 1 (CYP19A1), found in Sus scrofa (Pig).